A 163-amino-acid chain; its full sequence is UPF0262 protein RPE_4483 (163 aa).

It belongs to the UPF0262 family.

The protein is UPF0262 protein RPE_4483 of Rhodopseudomonas palustris (strain BisA53).